The following is a 230-amino-acid chain: MSCSIFKDLPEDHPRRLIPALCRQFYHLGWVTGTGGGMSIKLNNEIYIAPSGVQKERMQPEDLFVQDIDGKDLQMPPEIRELKKSQCTPLFMLAYRHRNAGAVIHTHSQHAVMATLLWPGKTFRCTHLEMIKGVYDDADKRYLQYDEQLVVPIIENTPHERDLADSMYAAMMEHPGCSAVLVRRHGVYVWGQTWEKAKAISECYDYLFSIAVEMKKAGLDPETFEDASKA.

C87 lines the substrate pocket. H105 and H107 together coordinate Zn(2+). E129 serves as the catalytic Proton donor/acceptor. Residue H185 participates in Zn(2+) binding.

The protein belongs to the aldolase class II family. MtnB subfamily. The cofactor is Zn(2+).

It is found in the cytoplasm. The enzyme catalyses 5-(methylsulfanyl)-D-ribulose 1-phosphate = 5-methylsulfanyl-2,3-dioxopentyl phosphate + H2O. It functions in the pathway amino-acid biosynthesis; L-methionine biosynthesis via salvage pathway; L-methionine from S-methyl-5-thio-alpha-D-ribose 1-phosphate: step 2/6. Its function is as follows. Catalyzes the dehydration of methylthioribulose-1-phosphate (MTRu-1-P) into 2,3-diketo-5-methylthiopentyl-1-phosphate (DK-MTP-1-P). The chain is Probable methylthioribulose-1-phosphate dehydratase from Drosophila pseudoobscura pseudoobscura (Fruit fly).